Reading from the N-terminus, the 272-residue chain is Ribonuclease HII (272 aa).

Residues 87–272 (KYVAGVDEVG…HRMSFLKNIL (186 aa)) form the RNase H type-2 domain. 3 residues coordinate a divalent metal cation: Asp-93, Glu-94, and Asp-188.

The protein belongs to the RNase HII family. Mn(2+) serves as cofactor. It depends on Mg(2+) as a cofactor.

The protein resides in the cytoplasm. It catalyses the reaction Endonucleolytic cleavage to 5'-phosphomonoester.. Functionally, endonuclease that specifically degrades the RNA of RNA-DNA hybrids. This is Ribonuclease HII from Clostridium perfringens (strain ATCC 13124 / DSM 756 / JCM 1290 / NCIMB 6125 / NCTC 8237 / Type A).